We begin with the raw amino-acid sequence, 321 residues long: Cytochrome f (321 aa).

Residues 1–38 (MINLFLLKYKTAFSTFLKPFAYLSLILSVCFYSIQAQA) form the signal peptide. Residues phenylalanine 39, cysteine 59, cysteine 62, and histidine 63 each coordinate heme. The chain crosses the membrane as a helical span at residues 287–306 (VKGLIAFFFTVILAQILLVL).

Belongs to the cytochrome f family. In terms of assembly, the 4 large subunits of the cytochrome b6-f complex are cytochrome b6, subunit IV (17 kDa polypeptide, petD), cytochrome f and the Rieske protein, while the 4 small subunits are PetG, PetL, PetM and PetN. The complex functions as a dimer. Requires heme as cofactor.

It is found in the plastid. The protein resides in the chloroplast thylakoid membrane. In terms of biological role, component of the cytochrome b6-f complex, which mediates electron transfer between photosystem II (PSII) and photosystem I (PSI), cyclic electron flow around PSI, and state transitions. The chain is Cytochrome f (petA) from Guillardia theta (Cryptophyte).